The following is a 792-amino-acid chain: Phenylalanine--tRNA ligase beta subunit (792 aa).

A tRNA-binding domain is found at 38–148 (NTKLAGFIVA…DDYKVGNKFF (111 aa)). Residues 406-482 (EADTKVSFDY…RIYGYDKIKE (77 aa)) form the B5 domain. The Mg(2+) site is built by aspartate 460, aspartate 466, glutamate 469, and glutamate 470. Residues 698–790 (YKHQSVKRDF…VHKNTGGILR (93 aa)) enclose the FDX-ACB domain.

It belongs to the phenylalanyl-tRNA synthetase beta subunit family. Type 1 subfamily. In terms of assembly, tetramer of two alpha and two beta subunits. The cofactor is Mg(2+).

The protein resides in the cytoplasm. It carries out the reaction tRNA(Phe) + L-phenylalanine + ATP = L-phenylalanyl-tRNA(Phe) + AMP + diphosphate + H(+). This chain is Phenylalanine--tRNA ligase beta subunit, found in Wolbachia sp. subsp. Brugia malayi (strain TRS).